The following is a 129-amino-acid chain: Small ribosomal subunit protein uS12 (129 aa).

3-methylthioaspartic acid is present on Asp-89. Residues 101–129 (TLDTSGVSDRKQSRSKYGAKQPKAVAAKK) are disordered.

This sequence belongs to the universal ribosomal protein uS12 family. As to quaternary structure, part of the 30S ribosomal subunit. Contacts proteins S8 and S17. May interact with IF1 in the 30S initiation complex.

Its function is as follows. With S4 and S5 plays an important role in translational accuracy. Functionally, interacts with and stabilizes bases of the 16S rRNA that are involved in tRNA selection in the A site and with the mRNA backbone. Located at the interface of the 30S and 50S subunits, it traverses the body of the 30S subunit contacting proteins on the other side and probably holding the rRNA structure together. The combined cluster of proteins S8, S12 and S17 appears to hold together the shoulder and platform of the 30S subunit. The chain is Small ribosomal subunit protein uS12 from Chlorobium luteolum (strain DSM 273 / BCRC 81028 / 2530) (Pelodictyon luteolum).